The sequence spans 286 residues: Thymidylate synthase (286 aa).

DUMP is bound at residue Arg-140 to Arg-141. The Nucleophile role is filled by Cys-161. DUMP-binding positions include Arg-185–Asp-188, Asn-196, and His-226–Tyr-228. Asp-188 is a (6R)-5,10-methylene-5,6,7,8-tetrahydrofolate binding site. Ala-285 is a (6R)-5,10-methylene-5,6,7,8-tetrahydrofolate binding site.

It belongs to the thymidylate synthase family. Bacterial-type ThyA subfamily. As to quaternary structure, homodimer.

It localises to the cytoplasm. The enzyme catalyses dUMP + (6R)-5,10-methylene-5,6,7,8-tetrahydrofolate = 7,8-dihydrofolate + dTMP. It functions in the pathway pyrimidine metabolism; dTTP biosynthesis. Its function is as follows. Catalyzes the reductive methylation of 2'-deoxyuridine-5'-monophosphate (dUMP) to 2'-deoxythymidine-5'-monophosphate (dTMP) while utilizing 5,10-methylenetetrahydrofolate (mTHF) as the methyl donor and reductant in the reaction, yielding dihydrofolate (DHF) as a by-product. This enzymatic reaction provides an intracellular de novo source of dTMP, an essential precursor for DNA biosynthesis. The chain is Thymidylate synthase from Streptococcus thermophilus (strain ATCC BAA-491 / LMD-9).